The chain runs to 219 residues: Large ribosomal subunit protein uL3 (219 aa).

Residues 134–153 (RASHGNSRSHNVPGSIGMAQ) form a disordered region. N5-methylglutamine is present on Gln-153.

Belongs to the universal ribosomal protein uL3 family. In terms of assembly, part of the 50S ribosomal subunit. Forms a cluster with proteins L14 and L19. Post-translationally, methylated by PrmB.

In terms of biological role, one of the primary rRNA binding proteins, it binds directly near the 3'-end of the 23S rRNA, where it nucleates assembly of the 50S subunit. The polypeptide is Large ribosomal subunit protein uL3 (Paraburkholderia phytofirmans (strain DSM 17436 / LMG 22146 / PsJN) (Burkholderia phytofirmans)).